The chain runs to 187 residues: Elongation factor P (187 aa).

The protein belongs to the elongation factor P family.

It localises to the cytoplasm. It participates in protein biosynthesis; polypeptide chain elongation. Its function is as follows. Involved in peptide bond synthesis. Stimulates efficient translation and peptide-bond synthesis on native or reconstituted 70S ribosomes in vitro. Probably functions indirectly by altering the affinity of the ribosome for aminoacyl-tRNA, thus increasing their reactivity as acceptors for peptidyl transferase. This Helicobacter pylori (strain G27) protein is Elongation factor P.